The chain runs to 102 residues: NADH-quinone oxidoreductase subunit K (102 aa).

3 helical membrane passes run 5–25 (IAHYLTVSAVLFTLGVFGIFL), 31–51 (IVILMSVELILLAVNINFVAF), and 66–86 (FVLTVAAAEAAIGLAILVVFF).

Belongs to the complex I subunit 4L family. In terms of assembly, NDH-1 is composed of 14 different subunits. Subunits NuoA, H, J, K, L, M, N constitute the membrane sector of the complex.

The protein resides in the cell inner membrane. It catalyses the reaction a quinone + NADH + 5 H(+)(in) = a quinol + NAD(+) + 4 H(+)(out). Its function is as follows. NDH-1 shuttles electrons from NADH, via FMN and iron-sulfur (Fe-S) centers, to quinones in the respiratory chain. The immediate electron acceptor for the enzyme in this species is believed to be ubiquinone. Couples the redox reaction to proton translocation (for every two electrons transferred, four hydrogen ions are translocated across the cytoplasmic membrane), and thus conserves the redox energy in a proton gradient. The polypeptide is NADH-quinone oxidoreductase subunit K (Mesorhizobium japonicum (strain LMG 29417 / CECT 9101 / MAFF 303099) (Mesorhizobium loti (strain MAFF 303099))).